The chain runs to 591 residues: L-fucose isomerase (591 aa).

Catalysis depends on proton acceptor residues E337 and D361. Mn(2+) contacts are provided by E337, D361, and H528.

This sequence belongs to the L-fucose isomerase family. As to quaternary structure, homohexamer. Requires Mn(2+) as cofactor.

The protein resides in the cytoplasm. It catalyses the reaction L-fucose = L-fuculose. It participates in carbohydrate degradation; L-fucose degradation; L-lactaldehyde and glycerone phosphate from L-fucose: step 1/3. Converts the aldose L-fucose into the corresponding ketose L-fuculose. This chain is L-fucose isomerase, found in Klebsiella pneumoniae (strain 342).